Reading from the N-terminus, the 728-residue chain is Probable 3',5'-cyclic phosphodiesterase pde-5 (728 aa).

In terms of domain architecture, GAF spans 214 to 371 (SMDAVIIKVM…HHAKLYDKIR (158 aa)). Positions 390 to 709 (CNADEVNKLK…KKWEELAEEQ (320 aa)) constitute a PDEase domain. Histidine 465 functions as the Proton donor in the catalytic mechanism. Histidine 469, histidine 503, aspartate 504, and aspartate 614 together coordinate a divalent metal cation. The stretch at 691-728 (MRERCEYNAKKWEELAEEQRKKQEALAQQNGEANETQE) forms a coiled coil. Residues 708–728 (EQRKKQEALAQQNGEANETQE) form a disordered region. Residues 716-728 (LAQQNGEANETQE) are compositionally biased toward polar residues.

This sequence belongs to the cyclic nucleotide phosphodiesterase family. A divalent metal cation serves as cofactor.

The catalysed reaction is a nucleoside 3',5'-cyclic phosphate + H2O = a nucleoside 5'-phosphate + H(+). Its function is as follows. Redundantly with pde-1, plays a role in the AFD thermosensory neurons to regulate microvilli receptive ending morphology, possibly by regulating cGMP levels. This is Probable 3',5'-cyclic phosphodiesterase pde-5 (pde-5) from Caenorhabditis elegans.